The following is a 36-amino-acid chain: Amanexitide proprotein 1 (36 aa).

Positions 1–10 (MSDINTARLP) are excised as a propeptide. Residues 11 to 19 (VFSLPVFFP) constitute a cross-link (cyclopeptide (Val-Pro)). The propeptide occupies 20–36 (FVSDDIQAVLTRGESLC).

This sequence belongs to the MSDIN fungal toxin family. Post-translationally, processed by the macrocyclase-peptidase enzyme POPB to yield a toxic cyclic nonapeptide. POPB first removes 10 residues from the N-terminus. Conformational trapping of the remaining peptide forces the enzyme to release this intermediate rather than proceed to macrocyclization. The enzyme rebinds the remaining peptide in a different conformation and catalyzes macrocyclization of the N-terminal 9 residues. In terms of tissue distribution, expressed in basidiocarps.

In terms of biological role, cyclic nonapeptide that belongs to the MSDIN-like toxin family responsible for a large number of food poisoning cases and deaths. This Amanita exitialis (Guangzhou destroying angel) protein is Amanexitide proprotein 1.